The chain runs to 335 residues: Methionine import ATP-binding protein MetN 2 (335 aa).

Residues 2 to 242 form the ABC transporter domain; that stretch reads IEFQNVHKTY…PEHPTTKRFV (241 aa). Residue 38–45 coordinates ATP; the sequence is GHSGAGKS.

It belongs to the ABC transporter superfamily. Methionine importer (TC 3.A.1.24) family. In terms of assembly, the complex is composed of two ATP-binding proteins (MetN), two transmembrane proteins (MetI) and a solute-binding protein (MetQ).

It is found in the cell inner membrane. It carries out the reaction L-methionine(out) + ATP + H2O = L-methionine(in) + ADP + phosphate + H(+). The catalysed reaction is D-methionine(out) + ATP + H2O = D-methionine(in) + ADP + phosphate + H(+). Functionally, part of the ABC transporter complex MetNIQ involved in methionine import. Responsible for energy coupling to the transport system. The sequence is that of Methionine import ATP-binding protein MetN 2 from Pseudomonas entomophila (strain L48).